The following is a 301-amino-acid chain: Phospholipase A1 (301 aa).

The cysteines at positions 4 and 87 are disulfide-linked. The Nucleophile role is filled by serine 137. Catalysis depends on aspartate 165, which acts as the Charge relay system. Disulfide bonds link cysteine 176–cysteine 181 and cysteine 219–cysteine 228. Residue histidine 230 is the Charge relay system of the active site. Disulfide bonds link cysteine 245/cysteine 269, cysteine 246/cysteine 294, and cysteine 262/cysteine 267.

Belongs to the AB hydrolase superfamily. Lipase family. As to expression, expressed by the venom gland.

Its subcellular location is the secreted. It carries out the reaction a 1,2-diacyl-sn-glycero-3-phosphocholine + H2O = a 2-acyl-sn-glycero-3-phosphocholine + a fatty acid + H(+). Catalyzes the hydrolysis of phosphatidylcholine with phospholipase A1 activity. May act as an allergen and induce hemolytic activity. This is Phospholipase A1 from Vespa crabro (European hornet).